The chain runs to 104 residues: Iron-sulfur cluster assembly protein CyaY (104 aa).

The protein belongs to the frataxin family.

In terms of biological role, involved in iron-sulfur (Fe-S) cluster assembly. May act as a regulator of Fe-S biogenesis. This chain is Iron-sulfur cluster assembly protein CyaY, found in Vibrio cholerae serotype O1 (strain ATCC 39541 / Classical Ogawa 395 / O395).